The chain runs to 295 residues: Small ribosomal subunit protein uS2 (295 aa).

An N-acetylserine modification is found at Ser2. Ser43 is modified (phosphoserine). Position 52 is an N6-acetyllysine (Lys52). An interaction with PPP1R16B region spans residues 54 to 113; sequence TWEKLLLAARAIVAIENPADVSVISSRNTGQRAVLKFAAATGATPIAGRFTPGTFTNQIQ. Lys89 is subject to N6-acetyllysine; alternate. Residue Lys89 forms a Glycyl lysine isopeptide (Lys-Gly) (interchain with G-Cter in SUMO2); alternate linkage. Phosphothreonine is present on Thr97. Laminin-binding stretches follow at residues 161 to 180 and 205 to 229; these read IPCNNKGAHSVGLMWWMLAR and RDPEEIEKEEQAAAEKAVTKEEFQG. [DE]-W-[ST] repeat units follow at residues 230–232, 247–249, 266–268, 275–277, and 293–295; these read EWT, DWS, and EWS. The segment at 242–295 is laminin-binding; that stretch reads QPEVADWSEGVQVPSVPIQQFPTEDWSAQPTTEDWSAAPTAQATEWVGTTTEWS. The disordered stretch occupies residues 266–295; it reads DWSAQPTTEDWSAAPTAQATEWVGTTTEWS.

Belongs to the universal ribosomal protein uS2 family. As to quaternary structure, monomer (37LRP) and homodimer (67LR). Component of the small ribosomal subunit. Mature ribosomes consist of a small (40S) and a large (60S) subunit. The 40S subunit contains about 33 different proteins and 1 molecule of RNA (18S). The 60S subunit contains about 49 different proteins and 3 molecules of RNA (28S, 5.8S and 5S). Interacts with RPS21. Interacts with several laminins including at least LAMB1. Interacts with MDK. The mature dimeric form interacts with PPP1R16B (via its fourth ankyrin repeat). Interacts with PPP1CA only in the presence of PPP1R16B. Acylated. Acylation may be a prerequisite for conversion of the monomeric 37 kDa laminin receptor precursor (37LRP) to the mature dimeric 67 kDa laminin receptor (67LR), and may provide a mechanism for membrane association. Post-translationally, cleaved by stromelysin-3 (ST3) at the cell surface. Cleavage by stromelysin-3 may be a mechanism to alter cell-extracellular matrix interactions.

The protein resides in the cell membrane. Its subcellular location is the cytoplasm. It is found in the nucleus. Its function is as follows. Required for the assembly and/or stability of the 40S ribosomal subunit. Required for the processing of the 20S rRNA-precursor to mature 18S rRNA in a late step of the maturation of 40S ribosomal subunits. Also functions as a cell surface receptor for laminin. Plays a role in cell adhesion to the basement membrane and in the consequent activation of signaling transduction pathways. May play a role in cell fate determination and tissue morphogenesis. Also acts as a receptor for several other ligands, including the pathogenic prion protein, viruses, and bacteria. Acts as a PPP1R16B-dependent substrate of PPP1CA. The chain is Small ribosomal subunit protein uS2 from Sus scrofa (Pig).